Consider the following 325-residue polypeptide: Diacylglycerol acyltransferase/mycolyltransferase Ag85B (325 aa).

The N-terminal stretch at 1–38 is a signal peptide; that stretch reads MTFIDKIRGHWARRMTVAAVAALLLPGLVGVVGGSATA. 82–83 lines the substrate pocket; that stretch reads LR. Residues 98–108 form a fibronectin-binding region; that stretch reads FEMFLDSGLSV. Cysteine 127 and cysteine 132 form a disulfide bridge. Serine 166 lines the substrate pocket. Serine 166 serves as the catalytic Nucleophile. Glutamate 272 is an active-site residue. Substrate is bound by residues 274–277 and 304–306; these read LTIR and HNW. Histidine 304 is an active-site residue.

This sequence belongs to the mycobacterial A85 antigen family.

Its subcellular location is the secreted. The enzyme catalyses 2 alpha,alpha'-trehalose 6-mycolate = alpha,alpha'-trehalose 6,6'-bismycolate + alpha,alpha-trehalose. It carries out the reaction an acyl-CoA + a 1,2-diacyl-sn-glycerol = a triacyl-sn-glycerol + CoA. Its function is as follows. The antigen 85 proteins (FbpA, FbpB, FbpC) are responsible for the high affinity of mycobacteria for fibronectin, a large adhesive glycoprotein. They also help to maintain the integrity of the cell wall by catalyzing the transfer of mycolic acids to cell wall arabinogalactan and through the synthesis of alpha,alpha-trehalose dimycolate (TDM, cord factor). They catalyze the transfer of a mycoloyl residue from one molecule of alpha,alpha-trehalose monomycolate (TMM) to another TMM, leading to the formation of TDM. The sequence is that of Diacylglycerol acyltransferase/mycolyltransferase Ag85B (fbpB) from Mycolicibacterium smegmatis (strain ATCC 700084 / mc(2)155) (Mycobacterium smegmatis).